The following is a 349-amino-acid chain: Isopentenyl-diphosphate delta-isomerase (349 aa).

A substrate-binding site is contributed by 6–7 (RK). FMN is bound by residues 62-64 (AMT), serine 93, and asparagine 122. Glutamine 152 lines the substrate pocket. Glutamate 153 contacts Mg(2+). Residues lysine 184, threonine 214, 258 to 259 (GG), and 280 to 281 (AG) contribute to the FMN site.

It belongs to the IPP isomerase type 2 family. As to quaternary structure, homooctamer. Dimer of tetramers. It depends on FMN as a cofactor. NADPH is required as a cofactor. The cofactor is Mg(2+).

Its subcellular location is the cytoplasm. The catalysed reaction is isopentenyl diphosphate = dimethylallyl diphosphate. In terms of biological role, involved in the biosynthesis of isoprenoids. Catalyzes the 1,3-allylic rearrangement of the homoallylic substrate isopentenyl (IPP) to its allylic isomer, dimethylallyl diphosphate (DMAPP). The sequence is that of Isopentenyl-diphosphate delta-isomerase from Bacillus cereus (strain B4264).